The following is a 206-amino-acid chain: MAKYLGPKLKLSRREGTDLFLKSGLRSIESKCKLEQPPGQHGIRKPRLSDYAIQLREKQKVRRLYGVLERQFKIYYKLAASLKGNTGANLLQLLESRLDNVVYRMGFGCTRSESRQLINHKSIMVNNKVVNIASYQVSPNDQISIRNKSKNQSRIKAALELVEQREKPIWLEVNSTKMEGIFKRFPERSDLSAEINEYLIVELYSK.

One can recognise an S4 RNA-binding domain in the interval 96–156 (SRLDNVVYRM…NKSKNQSRIK (61 aa)).

This sequence belongs to the universal ribosomal protein uS4 family. Part of the 30S ribosomal subunit. Contacts protein S5. The interaction surface between S4 and S5 is involved in control of translational fidelity.

Its function is as follows. One of the primary rRNA binding proteins, it binds directly to 16S rRNA where it nucleates assembly of the body of the 30S subunit. Functionally, with S5 and S12 plays an important role in translational accuracy. The protein is Small ribosomal subunit protein uS4 of Buchnera aphidicola subsp. Acyrthosiphon pisum (strain 5A).